We begin with the raw amino-acid sequence, 284 residues long: Probable endonuclease 4 (284 aa).

Residues H69, H109, E145, D179, H182, H216, D229, H231, and E261 each contribute to the Zn(2+) site.

It belongs to the AP endonuclease 2 family. Zn(2+) is required as a cofactor.

The catalysed reaction is Endonucleolytic cleavage to 5'-phosphooligonucleotide end-products.. In terms of biological role, endonuclease IV plays a role in DNA repair. It cleaves phosphodiester bonds at apurinic or apyrimidinic (AP) sites, generating a 3'-hydroxyl group and a 5'-terminal sugar phosphate. This is Probable endonuclease 4 from Chlorobium phaeobacteroides (strain BS1).